The following is a 325-amino-acid chain: tRNA N6-adenosine threonylcarbamoyltransferase (325 aa).

H111 and H115 together coordinate Fe cation. Residues 134–138 (LISGG), D167, G180, and N277 contribute to the substrate site. D305 is a Fe cation binding site.

The protein belongs to the KAE1 / TsaD family. The cofactor is Fe(2+).

The protein resides in the cytoplasm. The protein localises to the secreted. The catalysed reaction is L-threonylcarbamoyladenylate + adenosine(37) in tRNA = N(6)-L-threonylcarbamoyladenosine(37) in tRNA + AMP + H(+). Required for the formation of a threonylcarbamoyl group on adenosine at position 37 (t(6)A37) in tRNAs that read codons beginning with adenine. Is involved in the transfer of the threonylcarbamoyl moiety of threonylcarbamoyl-AMP (TC-AMP) to the N6 group of A37, together with TsaE and TsaB. TsaD likely plays a direct catalytic role in this reaction. The sequence is that of tRNA N6-adenosine threonylcarbamoyltransferase from Mannheimia haemolytica (Pasteurella haemolytica).